The primary structure comprises 273 residues: Proteasome subunit beta type-10 (273 aa).

The residue at position 1 (M1) is an N-acetylmethionine. The propeptide at 1 to 39 (MQKTVLEPQRGFSFENCERNAALQRALPGLRVPHARKTG) is removed in mature form. The Nucleophile role is filled by T40. Phosphoserine is present on S230.

The protein belongs to the peptidase T1B family. The 26S proteasome consists of a 20S proteasome core and two 19S regulatory subunits. The 20S proteasome core is composed of 28 subunits that are arranged in four stacked rings, resulting in a barrel-shaped structure. The two end rings are each formed by seven alpha subunits, and the two central rings are each formed by seven beta subunits. The catalytic chamber with the active sites is on the inside of the barrel. Component of the immunoproteasome, where it displaces the equivalent housekeeping subunit PSMB7. Component of the spermatoproteasome, a form of the proteasome specifically found in testis. Autocleaved. The resulting N-terminal Thr residue of the mature subunit is responsible for the nucleophile proteolytic activity.

It localises to the cytoplasm. It is found in the nucleus. The catalysed reaction is Cleavage of peptide bonds with very broad specificity.. The proteasome is a multicatalytic proteinase complex which is characterized by its ability to cleave peptides with Arg, Phe, Tyr, Leu, and Glu adjacent to the leaving group at neutral or slightly basic pH. The proteasome has an ATP-dependent proteolytic activity. This subunit is involved in antigen processing to generate class I binding peptides. The polypeptide is Proteasome subunit beta type-10 (PSMB10) (Bos taurus (Bovine)).